Here is a 1005-residue protein sequence, read N- to C-terminus: Negative regulator of pleiotropic drug resistance STB5 (1005 aa).

Residues M1 to E28 form a disordered region. Residues C32–C59 constitute a DNA-binding region (zn(2)-C6 fungal-type). 3 disordered regions span residues G129 to R151, K666 to K693, and T763 to R831. The span at K673–K693 shows a compositional bias: basic and acidic residues. Residues T763 to Q773 are compositionally biased toward polar residues. Residues E792–N801 are compositionally biased toward basic and acidic residues.

Its subcellular location is the nucleus. In terms of biological role, transcription factor that negatively regulates pleiotropic drug resistance genes, including the ABC transporter genes CDR1, PDH1, and YOR1. In Candida glabrata (strain ATCC 2001 / BCRC 20586 / JCM 3761 / NBRC 0622 / NRRL Y-65 / CBS 138) (Yeast), this protein is Negative regulator of pleiotropic drug resistance STB5.